The sequence spans 207 residues: Probable mediator of RNA polymerase II transcription subunit 19b (207 aa).

A disordered region spans residues 99–207 (DTAPVELPPA…SSKLDEMGAM (109 aa)). Residues 127–152 (DRKHRKHKDKKEKDREHKKHKHKHKD) are compositionally biased toward basic residues. The segment covering 153 to 167 (RIKDKDKDKDRDKKK) has biased composition (basic and acidic residues). The segment covering 168–179 (EKSGHHDKKRKN) has biased composition (basic residues).

It belongs to the plant Mediator complex subunit 19 family. As to quaternary structure, component of the Mediator complex.

It is found in the nucleus. Component of the Mediator complex, a coactivator involved in the regulated transcription of nearly all RNA polymerase II-dependent genes. Mediator functions as a bridge to convey information from gene-specific regulatory proteins to the basal RNA polymerase II transcription machinery. The Mediator complex, having a compact conformation in its free form, is recruited to promoters by direct interactions with regulatory proteins and serves for the assembly of a functional preinitiation complex with RNA polymerase II and the general transcription factors. This Arabidopsis thaliana (Mouse-ear cress) protein is Probable mediator of RNA polymerase II transcription subunit 19b (MED19B).